The primary structure comprises 1823 residues: AF4/FMR2 family member lilli (1823 aa).

Residues M1 to N41 are compositionally biased toward low complexity. 12 disordered regions span residues M1–I87, G126–I305, Q422–Y544, A570–S626, D686–G712, P753–T1057, A1071–R1287, A1322–T1350, F1413–L1448, E1480–S1531, T1547–L1567, and G1715–Q1744. Basic and acidic residues predominate over residues R53–N79. Composition is skewed to low complexity over residues G126–S147, Q156–Q174, and P205–P249. A compositionally biased stretch (pro residues) spans P426–I438. A Phosphothreonine modification is found at T434. Residues L441–S454 show a composition bias toward basic and acidic residues. Positions L456–D466 are enriched in acidic residues. Phosphoserine occurs at positions 463 and 465. A compositionally biased stretch (low complexity) spans S475 to Q531. A compositionally biased stretch (gly residues) spans A582 to S598. Positions S599–N612 are enriched in low complexity. Positions S764–S785 are enriched in low complexity. Residues H818–L827 are compositionally biased toward polar residues. Positions P839 to M849 are enriched in basic residues. Residues S859 and S860 each carry the phosphoserine modification. 5 stretches are compositionally biased toward low complexity: residues A877 to A906, Q917 to A947, G962 to G979, A1002 to T1057, and N1102 to Q1161. A DNA-binding region (a.T hook) is located at residues K908–Q920. S939 and S941 each carry phosphoserine. Residues T1172–L1181 show a composition bias toward polar residues. 2 stretches are compositionally biased toward low complexity: residues S1182–S1203 and Q1253–Q1280. The span at T1334 to S1344 shows a compositional bias: polar residues. Residues E1480–R1496 are compositionally biased toward polar residues. A Phosphoserine modification is found at S1486. Low complexity predominate over residues Q1497–S1531. Residues T1555–P1565 are compositionally biased toward pro residues. A compositionally biased stretch (low complexity) spans G1715 to N1735.

Belongs to the AF4 family.

It localises to the nucleus. Has a role in transcriptional regulation. Acts in parallel with the Ras/MAPK and the PI3K/PKB pathways in the control of cell identity and cellular growth. Essential for regulation of the cytoskeleton and cell growth but not for cell proliferation or growth rate. Required specifically for the microtubule-based basal transport of lipid droplets. Plays a partially redundant function downstream of Raf in cell fate specification in the developing eye. Pair-rule protein that regulates embryonic cellularization, gastrulation and segmentation. The sequence is that of AF4/FMR2 family member lilli from Drosophila virilis (Fruit fly).